A 198-amino-acid chain; its full sequence is Chromophore lyase CpcT/CpeT 3 (198 aa).

Belongs to the CpcT/CpeT biliprotein lyase family.

Functionally, covalently attaches a chromophore to Cys residue(s) of phycobiliproteins. In Synechococcus sp. (strain JA-3-3Ab) (Cyanobacteria bacterium Yellowstone A-Prime), this protein is Chromophore lyase CpcT/CpeT 3.